We begin with the raw amino-acid sequence, 737 residues long: MAKQVFQTTFAGRELIVETGQVAKQANGSVVVRYGESTVLTAAVMSKKMATGDFFPLQVNYEEKMYAAGKFPGGFMKREGRPSTDATLTARLIDRPIRPMFAEGFRNEVQVINTVLSYDENASAPMAAMFGSSLALSISDIPFDGPIAGVQVGYVDGQIIINPSQEQAEQSLLELTVAGTKHAINMVESGAKELSEEIMLEALLKGHEAVKELIAFQEEIVAAVGKEKAEVELLHVDAELQAEIIAAYNSDLQKAVQVEEKLAREAATQVVKDQVTAVYEEKYADHEEFDRIMRDVAEILEQMEHAEVRRLITEDKVRPDGRKVDEIRPLDAVVDFLPRVHGSGLFTRGQTQALSVLTLAPMGETQIIDGLDPEYKKRFMHHYNFPQYSVGETGRYGAPGRREIGHGALGERALAQVLPSLEEFPYAIRLVAEVLESNGSSSQASICAGTLALMAGGVPIKAPVAGIAMGLISDGNNYTVLTDIQGLEDHFGDMDFKVAGTRDGITALQMDIKIQGITAEILTEALAQAKKARFEILDVIEATIPEVRPELAPTAPKIDTIKIDVDKIKIVIGKGGETIDKIIAETGVKIDIDEEGNVSIYSSDQDAINRAKEIIAGLVREAKVDEVYRAKVVRIEKFGAFVNLFDKTDALVHISEMAWTRTNRVEDLVEIGDEVDVKVIKIDEKGRIDASMKALLPRPPKPEHDEKGEKSERPHRPRHQKDYKPKKEFTETSKDSE.

Positions 489 and 495 each coordinate Mg(2+). The 60-residue stretch at 556 to 615 (PKIDTIKIDVDKIKIVIGKGGETIDKIIAETGVKIDIDEEGNVSIYSSDQDAINRAKEII) folds into the KH domain. The S1 motif domain occupies 625-693 (DEVYRAKVVR…EKGRIDASMK (69 aa)). The tract at residues 691 to 737 (SMKALLPRPPKPEHDEKGEKSERPHRPRHQKDYKPKKEFTETSKDSE) is disordered. Residues 700-737 (PKPEHDEKGEKSERPHRPRHQKDYKPKKEFTETSKDSE) show a composition bias toward basic and acidic residues.

This sequence belongs to the polyribonucleotide nucleotidyltransferase family. Mg(2+) is required as a cofactor.

Its subcellular location is the cytoplasm. It catalyses the reaction RNA(n+1) + phosphate = RNA(n) + a ribonucleoside 5'-diphosphate. In terms of biological role, involved in mRNA degradation. Catalyzes the phosphorolysis of single-stranded polyribonucleotides processively in the 3'- to 5'-direction. The protein is Polyribonucleotide nucleotidyltransferase of Streptococcus pneumoniae serotype 4 (strain ATCC BAA-334 / TIGR4).